Consider the following 337-residue polypeptide: uncharacterized protein (337 aa).

Positions 291-314 (NKTRQCSNTKTTTKSTMTPINNGF) are disordered. A compositionally biased stretch (low complexity) spans 299–308 (TKTTTKSTMT).

This is an uncharacterized protein from Acanthamoeba polyphaga mimivirus (APMV).